The following is a 541-amino-acid chain: Transmembrane protein 151 homolog (541 aa).

The next 3 helical transmembrane spans lie at 27–47 (GYGK…YATF), 73–93 (YNFV…MECW), and 254–274 (PWFL…SWPL). Residues 503 to 541 (ASISHSSSKDLKSLTLKSSSSNNNNNNSNNNNNDDPEHP) are disordered. A compositionally biased stretch (low complexity) spans 515-535 (SLTLKSSSSNNNNNNSNNNNN).

This sequence belongs to the TMEM151 family.

Its subcellular location is the membrane. This chain is Transmembrane protein 151 homolog, found in Caenorhabditis elegans.